Reading from the N-terminus, the 181-residue chain is Protein Syd (181 aa).

The protein belongs to the Syd family.

Its subcellular location is the cell inner membrane. Interacts with the SecY protein in vivo. May bind preferentially to an uncomplexed state of SecY, thus functioning either as a chelating agent for excess SecY in the cell or as a regulatory factor that negatively controls the translocase function. The chain is Protein Syd from Klebsiella pneumoniae (strain 342).